We begin with the raw amino-acid sequence, 320 residues long: Cytochrome f (320 aa).

An N-terminal signal peptide occupies residues 1 to 35; that stretch reads MEKRNTYDWVTRWVIASFSILTISYMITWTSISNA. The heme site is built by Tyr-36, Cys-56, Cys-59, and His-60. Residues 286–306 traverse the membrane as a helical segment; it reads IQGLLVFLASVVLAQIFLVLK.

This sequence belongs to the cytochrome f family. In terms of assembly, the 4 large subunits of the cytochrome b6-f complex are cytochrome b6, subunit IV (17 kDa polypeptide, petD), cytochrome f and the Rieske protein, while the 4 small subunits are PetG, PetL, PetM and PetN. The complex functions as a dimer. Heme serves as cofactor.

The protein localises to the plastid. It is found in the chloroplast thylakoid membrane. Its function is as follows. Component of the cytochrome b6-f complex, which mediates electron transfer between photosystem II (PSII) and photosystem I (PSI), cyclic electron flow around PSI, and state transitions. This chain is Cytochrome f, found in Welwitschia mirabilis (Tree tumbo).